The primary structure comprises 157 residues: Class 10 plant pathogenesis-related protein 2F (157 aa).

D8 contacts trans-zeatin. The Ca(2+) site is built by P32, V35, and I38. 4 residues coordinate trans-zeatin: E60, H69, Y81, and Y83.

It belongs to the BetVI family.

It localises to the cytoplasm. The protein resides in the cytosol. In terms of biological role, class II ribonuclease (RNase). Binds to cytokinins. Interacts with melatonin. In Lupinus luteus (European yellow lupine), this protein is Class 10 plant pathogenesis-related protein 2F.